The primary structure comprises 318 residues: NADH-ubiquinone oxidoreductase chain 1 (318 aa).

The next 8 membrane-spanning stretches (helical) occupy residues 3-23, 69-89, 102-122, 146-166, 171-191, 222-242, 253-273, and 294-314; these read FMNL…LTLL, VLFI…WIPL, ILFM…SGWA, LAII…STLI, HIWL…STLA, LFFL…IILF, ELYT…FLWV, and LPLT…LAGI.

Belongs to the complex I subunit 1 family. Core subunit of respiratory chain NADH dehydrogenase (Complex I) which is composed of 45 different subunits.

It localises to the mitochondrion inner membrane. The enzyme catalyses a ubiquinone + NADH + 5 H(+)(in) = a ubiquinol + NAD(+) + 4 H(+)(out). Functionally, core subunit of the mitochondrial membrane respiratory chain NADH dehydrogenase (Complex I) which catalyzes electron transfer from NADH through the respiratory chain, using ubiquinone as an electron acceptor. Essential for the catalytic activity and assembly of complex I. The protein is NADH-ubiquinone oxidoreductase chain 1 (MT-ND1) of Cnephaeus nilssonii (Northern bat).